We begin with the raw amino-acid sequence, 255 residues long: Acetylglutamate kinase (255 aa).

Substrate contacts are provided by residues 40–41 (GG), R62, and N153.

The protein belongs to the acetylglutamate kinase family. ArgB subfamily.

Its subcellular location is the cytoplasm. The catalysed reaction is N-acetyl-L-glutamate + ATP = N-acetyl-L-glutamyl 5-phosphate + ADP. Its pathway is amino-acid biosynthesis; L-arginine biosynthesis; N(2)-acetyl-L-ornithine from L-glutamate: step 2/4. Its function is as follows. Catalyzes the ATP-dependent phosphorylation of N-acetyl-L-glutamate. This chain is Acetylglutamate kinase, found in Bacillus cereus (strain 03BB102).